Consider the following 54-residue polypeptide: Ovomucoid (54 aa).

In terms of domain architecture, Kazal-like spans 4–54; sequence VDCSDYPKPVCSLDYMPLCGSDNTTYNNKCIFCNAVVDSNGTITLSHFGKC. 3 disulfides stabilise this stretch: Cys-6-Cys-36, Cys-14-Cys-33, and Cys-22-Cys-54. N-linked (GlcNAc...) asparagine glycosylation is present at Asn-43.

Its subcellular location is the secreted. This Haemorhous mexicanus (House finch) protein is Ovomucoid.